A 331-amino-acid polypeptide reads, in one-letter code: Autoinducer 2 import system permease protein LsrC (331 aa).

9 helical membrane passes run 14 to 34, 39 to 59, 70 to 90, 93 to 113, 115 to 135, 157 to 177, 206 to 226, 252 to 272, and 284 to 304; these read LIAI…YFSL, LVFS…LVML, IAGL…NLPV, LLTL…VTWL, IPAI…MLLL, LNIS…AWIL, IQII…IVFA, GISL…AFFL, and LPAW…LIFD.

The protein belongs to the binding-protein-dependent transport system permease family. AraH/RbsC subfamily. In terms of assembly, the complex is composed of two ATP-binding proteins (LsrA), two transmembrane proteins (LsrC and LsrD) and a solute-binding protein (LsrB).

The protein localises to the cell inner membrane. In terms of biological role, part of the ABC transporter complex LsrABCD involved in autoinducer 2 (AI-2) import. Probably responsible for the translocation of the substrate across the membrane. This Photorhabdus luminescens (Xenorhabdus luminescens) protein is Autoinducer 2 import system permease protein LsrC (lsrC).